A 177-amino-acid chain; its full sequence is Translationally-controlled tumor protein homolog (177 aa).

A TCTP domain is found at 1-177; sequence MIIYRDLFSG…IKQGLVVEKC (177 aa).

Belongs to the TCTP family.

Its subcellular location is the cytoplasm. Involved in calcium binding and microtubule stabilization. This Trichinella pseudospiralis (Parasitic roundworm) protein is Translationally-controlled tumor protein homolog.